Consider the following 201-residue polypeptide: ATP-dependent Clp protease proteolytic subunit (201 aa).

The active-site Nucleophile is the Ser-98. His-123 is a catalytic residue.

It belongs to the peptidase S14 family. As to quaternary structure, fourteen ClpP subunits assemble into 2 heptameric rings which stack back to back to give a disk-like structure with a central cavity, resembling the structure of eukaryotic proteasomes.

Its subcellular location is the cytoplasm. The enzyme catalyses Hydrolysis of proteins to small peptides in the presence of ATP and magnesium. alpha-casein is the usual test substrate. In the absence of ATP, only oligopeptides shorter than five residues are hydrolyzed (such as succinyl-Leu-Tyr-|-NHMec, and Leu-Tyr-Leu-|-Tyr-Trp, in which cleavage of the -Tyr-|-Leu- and -Tyr-|-Trp bonds also occurs).. Its function is as follows. Cleaves peptides in various proteins in a process that requires ATP hydrolysis. Has a chymotrypsin-like activity. Plays a major role in the degradation of misfolded proteins. This chain is ATP-dependent Clp protease proteolytic subunit, found in Desulfatibacillum aliphaticivorans.